A 323-amino-acid polypeptide reads, in one-letter code: MTALNHWQPSADIKNLLKRAKIIAEIRQFFTERGLLEVETPVLSEFGVTDLHLSTFSTEFLAPFGEQSKTLWLSTSPEYHMKRLLAAGSGPIFQISKVFRNEEAGNRHNPEFTMLEWYRPHFHMHRLINEVDDLLQQILDCPPAESLSYQFVFQEYVGLDPLSAERSELIEAARKHNFMAEDNEDRDTLLQFLFSEVVEPQIGKERPIAVYHFPSTQAALAQVSPEDQRVAERFEFYYKGLELANGFHELADAQEQRHRFELDNQQRQKCELPTREIDERFLAALEAGMPDASGVALGIDRLMMIALDCEKINDVISFAVDNA.

76–78 contacts substrate; sequence SPE. ATP is bound by residues 100-102 and asparagine 109; that span reads RNE. Tyrosine 118 serves as a coordination point for substrate. 242 to 243 provides a ligand contact to ATP; it reads EL. Residue glutamate 249 participates in substrate binding. Residue glycine 298 participates in ATP binding.

The protein belongs to the class-II aminoacyl-tRNA synthetase family. EpmA subfamily. As to quaternary structure, homodimer.

The catalysed reaction is D-beta-lysine + L-lysyl-[protein] + ATP = N(6)-((3R)-3,6-diaminohexanoyl)-L-lysyl-[protein] + AMP + diphosphate + H(+). In terms of biological role, with EpmB is involved in the beta-lysylation step of the post-translational modification of translation elongation factor P (EF-P). Catalyzes the ATP-dependent activation of (R)-beta-lysine produced by EpmB, forming a lysyl-adenylate, from which the beta-lysyl moiety is then transferred to the epsilon-amino group of a conserved specific lysine residue in EF-P. This is Elongation factor P--(R)-beta-lysine ligase from Haemophilus influenzae (strain PittGG).